A 326-amino-acid chain; its full sequence is CRISPR-associated endonuclease Cas1 (326 aa).

Residues Glu-191, His-255, and Asp-269 each contribute to the Mn(2+) site.

This sequence belongs to the CRISPR-associated endonuclease Cas1 family. As to quaternary structure, homodimer. Interacts with Cas3, in the absence of crRNA. Mg(2+) is required as a cofactor. The cofactor is Mn(2+).

CRISPR (clustered regularly interspaced short palindromic repeat), is an adaptive immune system that provides protection against mobile genetic elements (viruses, transposable elements and conjugative plasmids). CRISPR clusters contain sequences complementary to antecedent mobile elements and target invading nucleic acids. CRISPR clusters are transcribed and processed into CRISPR RNA (crRNA). Acts as a dsDNA endonuclease. Involved in the integration of spacer DNA into the CRISPR cassette. This Pectobacterium atrosepticum (strain SCRI 1043 / ATCC BAA-672) (Erwinia carotovora subsp. atroseptica) protein is CRISPR-associated endonuclease Cas1.